Consider the following 182-residue polypeptide: CKLF-like MARVEL transmembrane domain-containing protein 3 (182 aa).

Residues 1–12 (MWPPDPDPDPDP) show a composition bias toward acidic residues. A disordered region spans residues 1 to 21 (MWPPDPDPDPDPEPAGGSRPG). An MARVEL domain is found at 36–155 (FLCSLKGRLL…DFYLIFNDVA (120 aa)). The next 3 membrane-spanning stretches (helical) occupy residues 64–84 (ASAF…FLFA), 101–121 (MDFL…ITAI), and 131–151 (AAGV…YLIF).

It belongs to the chemokine-like factor family. As to expression, expressed in the leukocytes, placenta and testis.

It is found in the membrane. The chain is CKLF-like MARVEL transmembrane domain-containing protein 3 (CMTM3) from Homo sapiens (Human).